The primary structure comprises 293 residues: 4-hydroxy-tetrahydrodipicolinate synthase (293 aa).

Residue threonine 47 participates in pyruvate binding. Tyrosine 135 acts as the Proton donor/acceptor in catalysis. The active-site Schiff-base intermediate with substrate is the lysine 163. Residue valine 205 participates in pyruvate binding.

The protein belongs to the DapA family. Homotetramer; dimer of dimers.

It is found in the cytoplasm. It catalyses the reaction L-aspartate 4-semialdehyde + pyruvate = (2S,4S)-4-hydroxy-2,3,4,5-tetrahydrodipicolinate + H2O + H(+). Its pathway is amino-acid biosynthesis; L-lysine biosynthesis via DAP pathway; (S)-tetrahydrodipicolinate from L-aspartate: step 3/4. Catalyzes the condensation of (S)-aspartate-beta-semialdehyde [(S)-ASA] and pyruvate to 4-hydroxy-tetrahydrodipicolinate (HTPA). The chain is 4-hydroxy-tetrahydrodipicolinate synthase from Leptothrix cholodnii (strain ATCC 51168 / LMG 8142 / SP-6) (Leptothrix discophora (strain SP-6)).